The primary structure comprises 142 residues: Galectin-16 (142 aa).

One can recognise a Galectin domain in the interval 6–138 (VPYKLPVSLS…DVSLDSVLVN (133 aa)).

As to expression, predominantly and highly expressed in the placenta where it is localized mainly in the syncytiotrophoblast and in the endothelia of fetal vessels. Also detected in the amnion and chorionic trophoblasts in fetal membranes.

Binds lactose with high affinity. Strong inducer of T-cell apoptosis. The chain is Galectin-16 from Homo sapiens (Human).